A 429-amino-acid polypeptide reads, in one-letter code: Small ribosomal subunit protein mS47 (429 aa).

Residues glutamate 141, glycine 166, glutamate 189, and aspartate 197 each contribute to the substrate site.

This sequence belongs to the enoyl-CoA hydratase/isomerase family. Mitochondrion-specific ribosomal protein mS47 subfamily. In terms of assembly, component of the mitochondrial small ribosomal subunit (mt-SSU). Mature yeast 74S mitochondrial ribosomes consist of a small (37S) and a large (54S) subunit. The 37S small subunit contains a 15S ribosomal RNA (15S mt-rRNA) and at least 32 different proteins. The 54S large subunit contains a 21S rRNA (21S mt-rRNA) and at least 45 different proteins. mS47/snr1 forms a protuberance of the yeast mitoribosome and retains a solvent-exposed cavity likely capable of accommodating a substrate, in accordance with it being an active enzyme as well as an integral constituent of the mitoribosome.

The protein resides in the mitochondrion. It catalyses the reaction 3-hydroxy-2-methylpropanoyl-CoA + H2O = 3-hydroxy-2-methylpropanoate + CoA + H(+). The protein operates within amino-acid degradation; L-valine degradation. Functionally, component of the mitochondrial ribosome (mitoribosome), a dedicated translation machinery responsible for the synthesis of mitochondrial genome-encoded proteins, including at least some of the essential transmembrane subunits of the mitochondrial respiratory chain. The mitoribosomes are attached to the mitochondrial inner membrane and translation products are cotranslationally integrated into the membrane. mS47/snr1 has enzymatic activity in vitro, and is able to catalyze the specific hydrolysis of 3-hydroxyisobutyryl-CoA (HIBYL-CoA). However, because the turnover rate of mS47/snr1 is only a fraction of that of the homologous mammalian enzyme, the physiological function of this activity remains unclear. Has an indirect role in endocytic membrane trafficking. The chain is Small ribosomal subunit protein mS47 (snr1) from Schizosaccharomyces pombe (strain 972 / ATCC 24843) (Fission yeast).